The sequence spans 179 residues: UPF0316 protein Ping_1367 (179 aa).

2 helical membrane passes run 28 to 48 (FLASFIGFFEIIIWLVASAQV) and 55 to 75 (WYLALAYASGFSVGNYAGISI).

The protein belongs to the UPF0316 family.

The protein resides in the cell membrane. The sequence is that of UPF0316 protein Ping_1367 from Psychromonas ingrahamii (strain DSM 17664 / CCUG 51855 / 37).